Consider the following 202-residue polypeptide: 3-isopropylmalate dehydratase small subunit (202 aa).

Belongs to the LeuD family. LeuD type 1 subfamily. As to quaternary structure, heterodimer of LeuC and LeuD.

The enzyme catalyses (2R,3S)-3-isopropylmalate = (2S)-2-isopropylmalate. It functions in the pathway amino-acid biosynthesis; L-leucine biosynthesis; L-leucine from 3-methyl-2-oxobutanoate: step 2/4. In terms of biological role, catalyzes the isomerization between 2-isopropylmalate and 3-isopropylmalate, via the formation of 2-isopropylmaleate. This is 3-isopropylmalate dehydratase small subunit from Rhizobium rhizogenes (strain K84 / ATCC BAA-868) (Agrobacterium radiobacter).